Reading from the N-terminus, the 1018-residue chain is Inner centromere protein pic1 (1018 aa).

Residue Ser-171 is modified to Phosphoserine. Disordered stretches follow at residues Val-184–Lys-207, Arg-247–Pro-287, Ala-306–Ile-365, Thr-522–Ser-556, Glu-570–Pro-756, Glu-781–Lys-813, Thr-848–Asn-867, and His-877–Trp-944. Polar residues-rich tracts occupy residues Thr-189 to Ser-199 and Pro-268 to Pro-287. A compositionally biased stretch (low complexity) spans Ser-309–Tyr-320. Composition is skewed to polar residues over residues Val-329–Ser-339 and Thr-522–Pro-554. Basic and acidic residues-rich tracts occupy residues Glu-570–Ser-580 and Arg-624–Ser-644. Positions Asn-645–Ile-664 are enriched in polar residues. Basic and acidic residues-rich tracts occupy residues Arg-665–Pro-679 and Lys-692–Thr-702. Polar residues-rich tracts occupy residues Arg-705 to Ser-719 and Ser-784 to Gln-808. The segment covering Pro-890–Ser-902 has biased composition (low complexity).

The protein belongs to the INCENP family. As to quaternary structure, component of the CPC complex at least composed of ark1, bir1 and pic1.

The protein localises to the nucleus. It is found in the cytoplasm. It localises to the cytoskeleton. Its subcellular location is the spindle. In terms of biological role, component of the chromosomal passenger complex (CPC), a complex that acts as a key regulator of mitosis. Has a role in sister chromatid cohesion and condensation. The chain is Inner centromere protein pic1 (pic1) from Schizosaccharomyces pombe (strain 972 / ATCC 24843) (Fission yeast).